Reading from the N-terminus, the 255-residue chain is Post-GPI attachment to proteins factor 2 (255 aa).

5 helical membrane passes run 23 to 43 (LALV…IWSL), 111 to 131 (LGIL…CLSF), 143 to 163 (NAFV…YLLN), 185 to 205 (LFLV…RHNS), and 209 to 229 (AGVY…NMGF).

Belongs to the PGAP2 family.

The protein resides in the golgi apparatus membrane. It localises to the endoplasmic reticulum membrane. Its function is as follows. Involved in the lipid remodeling steps of GPI-anchor maturation. Required for stable expression of GPI-anchored proteins at the cell surface. This is Post-GPI attachment to proteins factor 2 from Drosophila melanogaster (Fruit fly).